Reading from the N-terminus, the 68-residue chain is Riparin-1.6 (68 aa).

Positions 1–15 (MKIIVFLAVLMLVSA) are cleaved as a signal peptide. The propeptide occupies 16–41 (QVCLVSAAEMEHSSDNELSSRDLVKR). An intrachain disulfide couples Cys47 to Cys53. Cys53 is subject to Cysteine amide. A propeptide spanning residues 57-68 (DIESSEGANGGE) is cleaved from the precursor.

As to expression, expressed by the skin glands.

Its subcellular location is the secreted. This is Riparin-1.6 from Crinia riparia (Streambank froglet).